The chain runs to 161 residues: MAQLLLIKDVEALGRSGEIVNVKPGFARNFLLPQSLAVIADKNTLRMQERLKAEREKRAIADKKESEAVAMQIEGMTLVQVVKVDQEGHMYGSVTVAEIVHLIQDHAKIELEKKDIQLKHPIKTTGVHSLVVKLKEGVTANFNLKVMSEEGYRTSLEEQKA.

It belongs to the bacterial ribosomal protein bL9 family.

Functionally, binds to the 23S rRNA. The protein is Large ribosomal subunit protein bL9 of Protochlamydia amoebophila (strain UWE25).